The chain runs to 528 residues: Glutamyl-tRNA(Gln) amidotransferase subunit A, mitochondrial (528 aa).

The active-site Charge relay system is Lys-76. The segment at 148-167 is disordered; the sequence is YREKRKQNPHSENEDSDWLI. Ser-171 (charge relay system) is an active-site residue. The Acyl-ester intermediate role is filled by Ser-195.

It belongs to the amidase family. GatA subfamily. In terms of assembly, subunit of the heterotrimeric GatCAB amidotransferase (AdT) complex, composed of A (QRSL1), B (GATB) and C (GATC) subunits.

The protein resides in the mitochondrion. The enzyme catalyses L-glutamyl-tRNA(Gln) + L-glutamine + ATP + H2O = L-glutaminyl-tRNA(Gln) + L-glutamate + ADP + phosphate + H(+). In terms of biological role, allows the formation of correctly charged Gln-tRNA(Gln) through the transamidation of misacylated Glu-tRNA(Gln) in the mitochondria. The reaction takes place in the presence of glutamine and ATP through an activated gamma-phospho-Glu-tRNA(Gln). The protein is Glutamyl-tRNA(Gln) amidotransferase subunit A, mitochondrial of Homo sapiens (Human).